The primary structure comprises 337 residues: Large ribosomal subunit protein uL3 (337 aa).

The interval 1-26 is disordered; sequence MTRHHQPRKGSVAFSPRKRVARETPR.

The protein belongs to the universal ribosomal protein uL3 family. Part of the 50S ribosomal subunit. Forms a cluster with proteins L14 and L24e.

In terms of biological role, one of the primary rRNA binding proteins, it binds directly near the 3'-end of the 23S rRNA, where it nucleates assembly of the 50S subunit. The sequence is that of Large ribosomal subunit protein uL3 from Methanosphaera stadtmanae (strain ATCC 43021 / DSM 3091 / JCM 11832 / MCB-3).